A 430-amino-acid polypeptide reads, in one-letter code: Mitochondrial distribution and morphology protein 12 (430 aa).

The SMP-LTD domain maps to 1 to 430 (MSIDIDWERA…VYPSFWTFLI (430 aa)). 3 disordered regions span residues 61-117 (DLSD…YESN), 177-276 (TPLG…RMRE), and 352-377 (MGPE…KPSS). Positions 69-82 (FYEDDDENFSDSSE) are enriched in acidic residues. Residues 85-96 (SPTREPVDRYGN) are compositionally biased toward basic and acidic residues. Polar residues-rich tracts occupy residues 211-233 (SAQS…SMSI) and 241-251 (ASQGMPNNQGQ). A compositionally biased stretch (basic and acidic residues) spans 265–276 (PLDDTPPRRMRE).

It belongs to the MDM12 family. As to quaternary structure, component of the ER-mitochondria encounter structure (ERMES) or MDM complex, composed of MMM1, MDM10, MDM12 and MDM34. An MMM1 homodimer associates with one molecule of MDM12 on each side in a pairwise head-to-tail manner, and the SMP-LTD domains of MMM1 and MDM12 generate a continuous hydrophobic tunnel for phospholipid trafficking.

Its subcellular location is the mitochondrion outer membrane. It localises to the endoplasmic reticulum membrane. In terms of biological role, component of the ERMES/MDM complex, which serves as a molecular tether to connect the endoplasmic reticulum (ER) and mitochondria. Components of this complex are involved in the control of mitochondrial shape and protein biogenesis, and function in nonvesicular lipid trafficking between the ER and mitochondria. MDM12 is required for the interaction of the ER-resident membrane protein MMM1 and the outer mitochondrial membrane-resident beta-barrel protein MDM10. The MDM12-MMM1 subcomplex functions in the major beta-barrel assembly pathway that is responsible for biogenesis of all mitochondrial outer membrane beta-barrel proteins, and acts in a late step after the SAM complex. The MDM10-MDM12-MMM1 subcomplex further acts in the TOM40-specific pathway after the action of the MDM12-MMM1 complex. Essential for establishing and maintaining the structure of mitochondria and maintenance of mtDNA nucleoids. This Ajellomyces capsulatus (strain G186AR / H82 / ATCC MYA-2454 / RMSCC 2432) (Darling's disease fungus) protein is Mitochondrial distribution and morphology protein 12.